The primary structure comprises 726 residues: Catalase-peroxidase (726 aa).

The disordered stretch occupies residues 1–33; that stretch reads MSTTDDTHNTLSTGKCPFHQGGHDRSAGAGTAS. Positions 105-226 form a cross-link, tryptophyl-tyrosyl-methioninium (Trp-Tyr) (with M-252); sequence WHGAGTYRSI…LGATEMGLIY (122 aa). H106 (proton acceptor) is an active-site residue. A cross-link (tryptophyl-tyrosyl-methioninium (Tyr-Met) (with W-105)) is located at residues 226-252; that stretch reads YVNPEGPDHSGEPLSAAAAIRATFGNM. H267 lines the heme b pocket.

The protein belongs to the peroxidase family. Peroxidase/catalase subfamily. As to quaternary structure, homodimer or homotetramer. Heme b is required as a cofactor. Formation of the three residue Trp-Tyr-Met cross-link is important for the catalase, but not the peroxidase activity of the enzyme.

The enzyme catalyses H2O2 + AH2 = A + 2 H2O. It catalyses the reaction 2 H2O2 = O2 + 2 H2O. Bifunctional enzyme with both catalase and broad-spectrum peroxidase activity. The polypeptide is Catalase-peroxidase (Salmonella paratyphi B (strain ATCC BAA-1250 / SPB7)).